A 124-amino-acid polypeptide reads, in one-letter code: Holo-[acyl-carrier-protein] synthase (124 aa).

2 residues coordinate Mg(2+): Asp-8 and Glu-57.

This sequence belongs to the P-Pant transferase superfamily. AcpS family. Requires Mg(2+) as cofactor.

The protein resides in the cytoplasm. It catalyses the reaction apo-[ACP] + CoA = holo-[ACP] + adenosine 3',5'-bisphosphate + H(+). In terms of biological role, transfers the 4'-phosphopantetheine moiety from coenzyme A to a Ser of acyl-carrier-protein. The sequence is that of Holo-[acyl-carrier-protein] synthase from Leptospira borgpetersenii serovar Hardjo-bovis (strain JB197).